The sequence spans 204 residues: Peptide deformylase (204 aa).

Fe cation is bound by residues C131 and H174. The active site involves E175. H178 lines the Fe cation pocket.

The protein belongs to the polypeptide deformylase family. Fe(2+) is required as a cofactor.

The catalysed reaction is N-terminal N-formyl-L-methionyl-[peptide] + H2O = N-terminal L-methionyl-[peptide] + formate. Functionally, removes the formyl group from the N-terminal Met of newly synthesized proteins. Requires at least a dipeptide for an efficient rate of reaction. N-terminal L-methionine is a prerequisite for activity but the enzyme has broad specificity at other positions. This Streptococcus pyogenes serotype M18 (strain MGAS8232) protein is Peptide deformylase.